The chain runs to 475 residues: AP-1 complex subunit mu-1-I (475 aa).

Residues 175–473 form the MHD domain; the sequence is KNEAFLDIVE…TQSGDDYTIR (299 aa). The tract at residues 240 to 262 is disordered; it reads ASATTSDNNTETDKKPSITSSSA.

Belongs to the adaptor complexes medium subunit family. In terms of assembly, adaptor protein complex 1 (AP-1) is a heterotetramer composed of two large adaptins (gamma-type subunit APL4 and beta-type subunit APL2), a medium adaptin (mu-type subunit APM1) and a small adaptin (sigma-type subunit APS1). AP-1 interacts with clathrin.

The protein resides in the cytoplasmic vesicle. Its subcellular location is the clathrin-coated vesicle membrane. The protein localises to the membrane. It localises to the clathrin-coated pit. In terms of biological role, component of the adaptor complexes which link clathrin to receptors in coated vesicles. Clathrin-associated protein complexes are believed to interact with the cytoplasmic tails of membrane proteins, leading to their selection and concentration. The AP-1 complex interacts directly with clathrin. AP57 is probably a subunit of the Golgi membrane adaptor. In Saccharomyces cerevisiae (strain ATCC 204508 / S288c) (Baker's yeast), this protein is AP-1 complex subunit mu-1-I (APM1).